Consider the following 425-residue polypeptide: Imidazolonepropionase (425 aa).

Residues H78 and H80 each coordinate Fe(3+). Residues H78 and H80 each contribute to the Zn(2+) site. 4-imidazolone-5-propanoate-binding residues include R87, Y150, and H183. Y150 is an N-formimidoyl-L-glutamate binding site. H248 is a binding site for Fe(3+). Residue H248 coordinates Zn(2+). Q251 contacts 4-imidazolone-5-propanoate. Residue D323 coordinates Fe(3+). D323 is a Zn(2+) binding site. N325 and G327 together coordinate N-formimidoyl-L-glutamate. T328 lines the 4-imidazolone-5-propanoate pocket.

Belongs to the metallo-dependent hydrolases superfamily. HutI family. Zn(2+) is required as a cofactor. Fe(3+) serves as cofactor.

It localises to the cytoplasm. It carries out the reaction 4-imidazolone-5-propanoate + H2O = N-formimidoyl-L-glutamate. Its pathway is amino-acid degradation; L-histidine degradation into L-glutamate; N-formimidoyl-L-glutamate from L-histidine: step 3/3. In terms of biological role, catalyzes the hydrolytic cleavage of the carbon-nitrogen bond in imidazolone-5-propanoate to yield N-formimidoyl-L-glutamate. It is the third step in the universal histidine degradation pathway. This chain is Imidazolonepropionase, found in Polaromonas sp. (strain JS666 / ATCC BAA-500).